Reading from the N-terminus, the 160-residue chain is Nucleotide-binding protein VS_1405 (160 aa).

The protein belongs to the YajQ family.

Its function is as follows. Nucleotide-binding protein. The sequence is that of Nucleotide-binding protein VS_1405 from Vibrio atlanticus (strain LGP32) (Vibrio splendidus (strain Mel32)).